A 540-amino-acid chain; its full sequence is Kinesin light chain (540 aa).

A coiled-coil region spans residues 34–138 (LETSVKGVKE…NKHLKYMASI (105 aa)). TPR repeat units follow at residues 206 to 239 (LRTL…LEKT), 248 to 281 (ATML…REKC), 290 to 323 (AATL…REKV), 332 to 365 (AKQL…YESK), 374 to 407 (AKTK…AHER), and 456 to 489 (TTTL…KKQH).

This sequence belongs to the kinesin light chain family. In terms of assembly, oligomeric complex composed of two heavy chains and two light chains. Interacts with unc-83; the interaction is direct. Interacts with unc-33; the interaction regulates unc-33 neurite localization. Interacts with casy-1.

Its subcellular location is the cytoplasm. It localises to the cytoskeleton. It is found in the nucleus envelope. Functionally, kinesin is a microtubule-associated force-producing protein that may play a role in organelle transport. The light chain may function in coupling of cargo to the heavy chain or in the modulation of its ATPase activity. Recruits unc-83 (within the unc-83-unc-84 LINC complex) to the nuclear envelope during nuclear migration to mediate the link between the nuclear envelope and the microtubule cytoskeleton in hypodermal precursor cells. The chain is Kinesin light chain from Caenorhabditis elegans.